Here is a 532-residue protein sequence, read N- to C-terminus: Membrane protein insertase YidC (532 aa).

The next 6 membrane-spanning stretches (helical) occupy residues 6 to 26 (IVLAIILSLVVFLGWHSFAEY), 317 to 337 (AIDFGMFSIIAKPLLTALTFF), 342 to 362 (GNWGVAIIVLTLCIKIVFWPL), 411 to 431 (GGCLPILLQIPVFIGLYQALL), 451 to 473 (VWLADLSAADPFYITPLLMGASM), and 496 to 516 (PIIFTVMFLNFPAGLVIYWLF).

Belongs to the OXA1/ALB3/YidC family. Type 1 subfamily. As to quaternary structure, interacts with the Sec translocase complex via SecD. Specifically interacts with transmembrane segments of nascent integral membrane proteins during membrane integration.

It is found in the cell membrane. Functionally, required for the insertion and/or proper folding and/or complex formation of integral membrane proteins into the membrane. Involved in integration of membrane proteins that insert both dependently and independently of the Sec translocase complex, as well as at least some lipoproteins. Aids folding of multispanning membrane proteins. This is Membrane protein insertase YidC from Lawsonia intracellularis (strain PHE/MN1-00).